Reading from the N-terminus, the 115-residue chain is Dolichyl-diphosphooligosaccharide--protein glycosyltransferase subunit DAD1 (115 aa).

At 1–31 (MGTSTAKEAHALIASLRSAYSATPTKLKIID) the chain is on the cytoplasmic side. Residues 32–52 (LYVVYAILTAVVQVVYMAIVG) form a helical membrane-spanning segment. The Lumenal portion of the chain corresponds to 53-55 (SFP). The helical transmembrane segment at 56 to 76 (FNAFLSGVLSCTGTAVLAVCL) threads the bilayer. The Cytoplasmic portion of the chain corresponds to 77–94 (RMQVNKENREFKDLPPER). Residues 95–115 (AFADFVLCNLVLHLVIMNFLG) form a helical membrane-spanning segment.

It belongs to the DAD/OST2 family. Component of the oligosaccharyltransferase (OST) complex.

The protein resides in the endoplasmic reticulum membrane. It functions in the pathway protein modification; protein glycosylation. Subunit of the oligosaccharyl transferase (OST) complex that catalyzes the initial transfer of a defined glycan (Glc(3)Man(9)GlcNAc(2) in eukaryotes) from the lipid carrier dolichol-pyrophosphate to an asparagine residue within an Asn-X-Ser/Thr consensus motif in nascent polypeptide chains, the first step in protein N-glycosylation. N-glycosylation occurs cotranslationally and the complex associates with the Sec61 complex at the channel-forming translocon complex that mediates protein translocation across the endoplasmic reticulum (ER). All subunits are required for a maximal enzyme activity. In Picea mariana (Black spruce), this protein is Dolichyl-diphosphooligosaccharide--protein glycosyltransferase subunit DAD1 (DAD1).